A 416-amino-acid chain; its full sequence is Dihydroorotase (416 aa).

The Zn(2+) site is built by histidine 53 and histidine 55. Residues 55-57 (HLR) and asparagine 87 contribute to the substrate site. Zn(2+) is bound by residues aspartate 145, histidine 172, histidine 225, and aspartate 298. Aspartate 298 is a catalytic residue. Histidine 302 provides a ligand contact to substrate.

This sequence belongs to the metallo-dependent hydrolases superfamily. DHOase family. Class I DHOase subfamily. The cofactor is Zn(2+).

It catalyses the reaction (S)-dihydroorotate + H2O = N-carbamoyl-L-aspartate + H(+). The protein operates within pyrimidine metabolism; UMP biosynthesis via de novo pathway; (S)-dihydroorotate from bicarbonate: step 3/3. Catalyzes the reversible cyclization of carbamoyl aspartate to dihydroorotate. The chain is Dihydroorotase from Deinococcus radiodurans (strain ATCC 13939 / DSM 20539 / JCM 16871 / CCUG 27074 / LMG 4051 / NBRC 15346 / NCIMB 9279 / VKM B-1422 / R1).